We begin with the raw amino-acid sequence, 493 residues long: uncharacterized protein (493 aa).

A helical membrane pass occupies residues 10-30 (LVPSTRFALSLVMFFGCLVTY). Asn35, Asn47, and Asn69 each carry an N-linked (GlcNAc...) asparagine glycan. 6 consecutive transmembrane segments (helical) span residues 85-105 (MVLSSFFYGYIGSQIIGGHLA), 112-132 (RVVFVTILGSALLTLLNPVAA), 144-164 (AAIGFLQGATFPAMHTMWSVW), 175-195 (GVTYAGAQIGNVIVLPLSGFL), 205-225 (PSIFYIIGVFGVLWTAVWWYV), and 272-292 (AVWACWAGHFAGDWGAYTMLV). An N-linked (GlcNAc...) asparagine glycan is attached at Asn305. 4 helical membrane passes run 311–331 (AVASIPYIAYFLAINAGGVLA), 348–368 (AAMLVALIGQGIFLVASGYCG), 375–395 (VIIFITCGMAISGLQYAGFVV), and 406–426 (GTVMGTGNTISALAGIISPAV). N-linked (GlcNAc...) asparagine glycosylation occurs at Asn433. The helical transmembrane segment at 441 to 461 (MVLWLTAGILTIGALLFSIFA) threads the bilayer.

Belongs to the major facilitator superfamily. Sodium/anion cotransporter family.

The protein localises to the membrane. This is an uncharacterized protein from Caenorhabditis elegans.